We begin with the raw amino-acid sequence, 103 residues long: Large ribosomal subunit protein bL21 (103 aa).

It belongs to the bacterial ribosomal protein bL21 family. In terms of assembly, part of the 50S ribosomal subunit. Contacts protein L20.

This protein binds to 23S rRNA in the presence of protein L20. The polypeptide is Large ribosomal subunit protein bL21 (Nautilia profundicola (strain ATCC BAA-1463 / DSM 18972 / AmH)).